The chain runs to 551 residues: MTHLPHWWQNGVIYQIYPKSFQDTTGSGTGDLRGVIQHLDYLHKLGVDAIWLTPFYVSPQVDNGYDVANYTAIDPTYGTLDDFDELVTQAKSRGIRIILDMVFNHTSTQHAWFREALNKESPYRQFYIWRDGEPETPPNNWRSKFGGSAWRWHAESEQYYLHLFAPEQADLNWENPAVRAELKKVCEFWADRGVDGLRLDVVNLISKDPRFPEDLDGDGRRFYTDGPRAHEFLHEMNRDVFTPRGLMTVGEMSSTSLEHCQRYAALTGSELSMTFNFHHLKVDYPGGEKWTLAKPDFVALKTLFRHWQQGMHNVAWNALFWCNHDQPRIVSRFGDEGEYRVPAAKMLAMVLHGMQGTPYIYQGEEIGMTNPHFTRITDYRDVESLNMFAELRNDGRDADELLAILASKSRDNSRTPMQWSNGDNAGFTAGEPWIGLGDNYQQINVEAALADDSSVFYTYQKLIALRKQEAILTWGNYQDLLPNSPVLWCYRREWKGQTLLVIANLSREIQPWQAGQMRGNWQLVMHNYEEASPQPCAMNLRPFEAVWWLQK.

Asp-200 acts as the Nucleophile in catalysis. The Proton donor role is filled by Glu-251.

Belongs to the glycosyl hydrolase 13 family.

It localises to the cytoplasm. It catalyses the reaction alpha,alpha-trehalose 6-phosphate + H2O = D-glucose 6-phosphate + D-glucose. In terms of biological role, hydrolyzes trehalose-6-phosphate to glucose and glucose 6-phosphate. Can also very effectively hydrolyze p-nitrophenyl-alpha-D-glucopyranoside, but it does not recognize trehalose, sucrose, maltose, isomaltose, or maltodextrins. The protein is Trehalose-6-phosphate hydrolase (treC) of Escherichia coli (strain K12).